A 403-amino-acid chain; its full sequence is Multifunctional CCA protein (403 aa).

Positions 8 and 11 each coordinate ATP. The CTP site is built by glycine 8 and arginine 11. The Mg(2+) site is built by aspartate 21 and aspartate 23. ATP-binding residues include arginine 91, arginine 137, and arginine 140. CTP-binding residues include arginine 91, arginine 137, and arginine 140. The HD domain maps to threonine 228–tryptophan 329.

Belongs to the tRNA nucleotidyltransferase/poly(A) polymerase family. Bacterial CCA-adding enzyme type 1 subfamily. In terms of assembly, monomer. Can also form homodimers and oligomers. Mg(2+) is required as a cofactor. Requires Ni(2+) as cofactor.

The catalysed reaction is a tRNA precursor + 2 CTP + ATP = a tRNA with a 3' CCA end + 3 diphosphate. It carries out the reaction a tRNA with a 3' CCA end + 2 CTP + ATP = a tRNA with a 3' CCACCA end + 3 diphosphate. Catalyzes the addition and repair of the essential 3'-terminal CCA sequence in tRNAs without using a nucleic acid template. Adds these three nucleotides in the order of C, C, and A to the tRNA nucleotide-73, using CTP and ATP as substrates and producing inorganic pyrophosphate. tRNA 3'-terminal CCA addition is required both for tRNA processing and repair. Also involved in tRNA surveillance by mediating tandem CCA addition to generate a CCACCA at the 3' terminus of unstable tRNAs. While stable tRNAs receive only 3'-terminal CCA, unstable tRNAs are marked with CCACCA and rapidly degraded. This Vibrio cholerae serotype O1 (strain ATCC 39541 / Classical Ogawa 395 / O395) protein is Multifunctional CCA protein.